Consider the following 503-residue polypeptide: Probable cytosol aminopeptidase (503 aa).

The Mn(2+) site is built by lysine 268 and aspartate 273. Residue lysine 280 is part of the active site. Aspartate 291, aspartate 350, and glutamate 352 together coordinate Mn(2+). Arginine 354 is a catalytic residue.

The protein belongs to the peptidase M17 family. Requires Mn(2+) as cofactor.

Its subcellular location is the cytoplasm. The catalysed reaction is Release of an N-terminal amino acid, Xaa-|-Yaa-, in which Xaa is preferably Leu, but may be other amino acids including Pro although not Arg or Lys, and Yaa may be Pro. Amino acid amides and methyl esters are also readily hydrolyzed, but rates on arylamides are exceedingly low.. It catalyses the reaction Release of an N-terminal amino acid, preferentially leucine, but not glutamic or aspartic acids.. Presumably involved in the processing and regular turnover of intracellular proteins. Catalyzes the removal of unsubstituted N-terminal amino acids from various peptides. The protein is Probable cytosol aminopeptidase of Nocardia farcinica (strain IFM 10152).